The following is a 610-amino-acid chain: Protein Spindly-B (610 aa).

Residues 1-392 (MEESETVLKL…IDKVKDELSL (392 aa)) are a coiled coil. The segment at 474–610 (TEAHGVSDAT…KPATAQCPQQ (137 aa)) is disordered. Composition is skewed to basic and acidic residues over residues 493–511 (SDDKKLPKEDLSLSTKDQD) and 535–548 (RIMEDEKDTPDLNK). The segment covering 549 to 561 (RNPNNCTITSIHP) has biased composition (polar residues). A compositionally biased stretch (basic and acidic residues) spans 570-583 (SELKKVDEEQEKRK).

The protein belongs to the Spindly family.

It localises to the chromosome. It is found in the centromere. The protein resides in the kinetochore. Functionally, required for the localization of dynein and dynactin to the mitotic kintochore. Dynein is believed to control the initial lateral interaction between the kinetochore and spindle microtubules and to facilitate the subsequent formation of end-on kinetochore-microtubule attachments mediated by the NDC80 complex. The polypeptide is Protein Spindly-B (spdl1-b) (Xenopus laevis (African clawed frog)).